Consider the following 488-residue polypeptide: Acetyl-CoA decarbonylase/synthase complex subunit gamma (488 aa).

The 4Fe-4S domain maps to 1-61; sequence MPKKISAMDI…FEKNKKKIIE (61 aa). 4 residues coordinate [4Fe-4S] cluster: C19, C22, C27, and C44.

As to quaternary structure, heterodimer of delta and gamma chains. The ACDS complex is made up of alpha, epsilon, beta, gamma and delta chains with a probable stoichiometry of (alpha(2)epsilon(2))(4)-beta(8)-(gamma(1)delta(1))(8). The cofactor is corrinoid. [4Fe-4S] cluster is required as a cofactor.

It catalyses the reaction 5,6,7,8-tetrahydrosarcinapterin + methyl-Co(III)-[corrinoid Fe-S protein] = 5-methyltetrahydrosarcinapterin + Co(I)-[corrinoid Fe-S protein] + H(+). Functionally, part of a complex that catalyzes the reversible cleavage of acetyl-CoA, allowing autotrophic growth from CO(2). The polypeptide is Acetyl-CoA decarbonylase/synthase complex subunit gamma (Methanocaldococcus jannaschii (strain ATCC 43067 / DSM 2661 / JAL-1 / JCM 10045 / NBRC 100440) (Methanococcus jannaschii)).